The following is a 269-amino-acid chain: Surfeit locus protein 4 (269 aa).

Helical transmembrane passes span F64 to V84, Y92 to W112, F179 to F199, L203 to W223, and T242 to M262. The short motif at K266–W269 is the Di-lysine motif element.

This sequence belongs to the SURF4 family.

The protein localises to the endoplasmic reticulum membrane. Its subcellular location is the endoplasmic reticulum-Golgi intermediate compartment membrane. It localises to the golgi apparatus membrane. Endoplasmic reticulum cargo receptor that mediates the export of lipoproteins by recruiting cargos into COPII vesicles to facilitate their secretion. This chain is Surfeit locus protein 4, found in Danio rerio (Zebrafish).